We begin with the raw amino-acid sequence, 424 residues long: Histidine--tRNA ligase (424 aa).

The protein belongs to the class-II aminoacyl-tRNA synthetase family. As to quaternary structure, homodimer.

Its subcellular location is the cytoplasm. It carries out the reaction tRNA(His) + L-histidine + ATP = L-histidyl-tRNA(His) + AMP + diphosphate + H(+). In Marinomonas sp. (strain MWYL1), this protein is Histidine--tRNA ligase.